Consider the following 324-residue polypeptide: Putative HTH-type transcriptional regulatory protein UNCMA_15260 (324 aa).

An HTH cro/C1-type domain is found at 132-189 (LRSLREAKNISLGELAMALGVSRRTISKYESGMNATIEAALKLEEILDAPIACPVNMI). Positions 143–162 (LGELAMALGVSRRTISKYES) form a DNA-binding region, H-T-H motif.

The protein is Putative HTH-type transcriptional regulatory protein UNCMA_15260 of Methanocella arvoryzae (strain DSM 22066 / NBRC 105507 / MRE50).